The sequence spans 348 residues: GMP reductase 2 (348 aa).

NADP(+) contacts are provided by residues 26–27 (SR), K78, 129–131 (DVA), and 180–181 (IG). 3 residues coordinate K(+): G181, G183, and C186. C186 functions as the Thioimidate intermediate in the catalytic mechanism. T188 (proton donor/acceptor) is an active-site residue. Position 189 (R189) interacts with K(+). Residues 219 to 221 (DGG), 242 to 243 (GG), 268 to 270 (GMS), and 286 to 290 (RASEG) contribute to the GMP site. NADP(+) is bound by residues M269 and 285 to 286 (YR). K291 carries the post-translational modification N6-acetyllysine. 314–317 (STCT) contributes to the NADP(+) binding site.

It belongs to the IMPDH/GMPR family. GuaC type 1 subfamily. Homotetramer. In terms of tissue distribution, highly expressed in heart, skeletal muscle, kidney, brain, liver, prostate, spleen, placenta, testis and ovary. Low expression in colon, thymus and peripheral blood leukocytes.

It catalyses the reaction IMP + NH4(+) + NADP(+) = GMP + NADPH + 2 H(+). Its function is as follows. Catalyzes the irreversible NADPH-dependent deamination of GMP to IMP. It functions in the conversion of nucleobase, nucleoside and nucleotide derivatives of G to A nucleotides, and in maintaining the intracellular balance of A and G nucleotides. Plays a role in modulating cellular differentiation. The protein is GMP reductase 2 of Homo sapiens (Human).